A 2121-amino-acid chain; its full sequence is Non-reducing polyketide synthase aoiG (2121 aa).

Residues 5–258 form the Starter acyltransferase (SAT) domain; it reads YIFGDQTVRV…LPVSIYAPYH (254 aa). The 432-residue stretch at 386 to 817 folds into the Ketosynthase family 3 (KS3) domain; sequence SSKIAIIGFS…GGNTAVLVED (432 aa). Catalysis depends on for beta-ketoacyl synthase activity residues cysteine 558, histidine 693, and histidine 735. A Malonyl-CoA:ACP transacylase (MAT) domain is found at 921-1239; the sequence is FLFTGQGAQQ…LSVLHLAGVR (319 aa). An N-terminal hotdog fold region spans residues 1302–1433; it reads QKILEEEMTA…CTIELQRPHQ (132 aa). The region spanning 1302-1608 is the PKS/mFAS DH domain; sequence QKILEEEMTA…FQKVARRVLE (307 aa). The Proton acceptor; for dehydratase activity role is filled by histidine 1334. The segment at 1461 to 1608 is C-terminal hotdog fold; the sequence is THKMRRGVAY…FQKVARRVLE (148 aa). Aspartate 1519 serves as the catalytic Proton donor; for dehydratase activity. The Carrier 1 domain maps to 1646–1723; that stretch reads PHVEDAWQQV…SLRIYLNMSS (78 aa). O-(pantetheine 4'-phosphoryl)serine is present on serine 1683. Residues 1728–1752 are compositionally biased toward low complexity; the sequence is DSIETSSYPTPDESTTTTITSPSGS. The disordered stretch occupies residues 1728–1760; the sequence is DSIETSSYPTPDESTTTTITSPSGSDRNVGRNS. The 78-residue stretch at 1763–1840 folds into the Carrier 2 domain; the sequence is DGVGTTVGLV…AITAALHAIF (78 aa). Serine 1800 carries the post-translational modification O-(pantetheine 4'-phosphoryl)serine. Positions 1872–1976 are TE/CLC (thioesterase/Claisen cyclase) domain; it reads TLFLFPDGSG…ILIDSPNPMG (105 aa).

It depends on pantetheine 4'-phosphate as a cofactor.

Non-reducing polyketide synthase; part of the gene cluster that mediates the biosynthesis of a methylated derivative of known natural products orthosporin and diaporthin. AoiG catalyzes the biosynthesis of the hexaketide isocoumarin scaffold, via condensation of one acetyl-CoA starter unit with 6 malonyl-CoA units. An oxidoreductase that has still to be identified catalyzes the stereospecific reduction of the carbonyl moiety of the hexaketide isocoumarin scaffold to generate the S-configured secondary alcohol at C-11 of orthosporin. The methyltrasferase aoiF then catalyzes the biotransformation of not only orthosporin to diaporthin but also diaporthin to the final product, by performing a tandem methylation of the polyketide core. The chain is Non-reducing polyketide synthase aoiG from Aspergillus oryzae (strain ATCC 42149 / RIB 40) (Yellow koji mold).